A 375-amino-acid polypeptide reads, in one-letter code: Chaperone protein DnaJ (375 aa).

Positions 5 to 69 (DYYEVLGVSK…QKRAQYDQFG (65 aa)) constitute a J domain. The CR-type zinc-finger motif lies at 132-214 (GKETIIEIPR…CGGTGKVKKR (83 aa)). Zn(2+) contacts are provided by cysteine 145, cysteine 148, cysteine 162, cysteine 165, cysteine 188, cysteine 191, cysteine 202, and cysteine 205. CXXCXGXG motif repeat units follow at residues 145–152 (CETCKGSG), 162–169 (CSHCGGSG), 188–195 (CHHCEGTG), and 202–209 (CSDCGGTG).

This sequence belongs to the DnaJ family. Homodimer. Zn(2+) serves as cofactor.

The protein resides in the cytoplasm. Its function is as follows. Participates actively in the response to hyperosmotic and heat shock by preventing the aggregation of stress-denatured proteins and by disaggregating proteins, also in an autonomous, DnaK-independent fashion. Unfolded proteins bind initially to DnaJ; upon interaction with the DnaJ-bound protein, DnaK hydrolyzes its bound ATP, resulting in the formation of a stable complex. GrpE releases ADP from DnaK; ATP binding to DnaK triggers the release of the substrate protein, thus completing the reaction cycle. Several rounds of ATP-dependent interactions between DnaJ, DnaK and GrpE are required for fully efficient folding. Also involved, together with DnaK and GrpE, in the DNA replication of plasmids through activation of initiation proteins. The protein is Chaperone protein DnaJ of Bacillus velezensis (strain DSM 23117 / BGSC 10A6 / LMG 26770 / FZB42) (Bacillus amyloliquefaciens subsp. plantarum).